A 181-amino-acid chain; its full sequence is Putative manganese efflux pump MntP (181 aa).

5 consecutive transmembrane segments (helical) span residues Ile-35–Ala-55, Val-59–Ile-79, Ala-102–Ile-122, Ile-126–Met-146, and Ile-161–Met-181.

Belongs to the MntP (TC 9.B.29) family.

The protein resides in the cell inner membrane. Its function is as follows. Probably functions as a manganese efflux pump. In Nitrosomonas eutropha (strain DSM 101675 / C91 / Nm57), this protein is Putative manganese efflux pump MntP.